Here is a 189-residue protein sequence, read N- to C-terminus: Lumazine protein (189 aa).

Lumazine-binding repeat units lie at residues Met-1–Gly-96 and Ala-97–Trp-189.

The cofactor is 6,7-dimethyl-8-(1-D-ribityl)lumazine.

Functionally, antenna protein that modulates the color of the bioluminescence emission of the luciferase. In the presence of LumP, luciferase emission is shifted to higher energy values (shorter wavelength). In Photobacterium phosphoreum, this protein is Lumazine protein (luxL).